Consider the following 298-residue polypeptide: Flavin-dependent thymidylate synthase (298 aa).

The ThyX domain occupies 41–251; it reads GFVRLVDYMG…PLTYAAFVEY (211 aa). Residues T87, 110–112, and E118 contribute to the FAD site; that span reads RHR. DUMP is bound by residues 107-110, 118-122, and R190; these read QWVR and EYSAR. The ThyX motif signature appears at 110-120; that stretch reads RHRTANVNEYS. FAD contacts are provided by residues 206–208 and H212; that span reads DLH. R217 is a dUMP binding site. Residue R217 is the Involved in ionization of N3 of dUMP, leading to its activation of the active site.

It belongs to the thymidylate synthase ThyX family. As to quaternary structure, homotetramer. FAD serves as cofactor.

It catalyses the reaction dUMP + (6R)-5,10-methylene-5,6,7,8-tetrahydrofolate + NADPH + H(+) = dTMP + (6S)-5,6,7,8-tetrahydrofolate + NADP(+). It functions in the pathway pyrimidine metabolism; dTTP biosynthesis. Catalyzes the reductive methylation of 2'-deoxyuridine-5'-monophosphate (dUMP) to 2'-deoxythymidine-5'-monophosphate (dTMP) while utilizing 5,10-methylenetetrahydrofolate (mTHF) as the methyl donor, and NADPH and FADH(2) as the reductant. The polypeptide is Flavin-dependent thymidylate synthase (Ehrlichia ruminantium (strain Welgevonden)).